The sequence spans 1206 residues: Pre-mRNA-splicing factor prp12 (1206 aa).

It belongs to the RSE1 family. As to quaternary structure, belongs to the 40S cdc5-associated complex (or cwf complex), a spliceosome sub-complex reminiscent of a late-stage spliceosome composed of the U2, U5 and U6 snRNAs and at least brr2, cdc5, cwf2/prp3, cwf3/syf1, cwf4/syf3, cwf5/ecm2, spp42/cwf6, cwf7/spf27, cwf8, cwf9, cwf10, cwf11, cwf12, prp45/cwf13, cwf14, cwf15, cwf16, cwf17, cwf18, cwf19, cwf20, cwf21, cwf22, cwf23, cwf24, cwf25, cwf26, cyp7/cwf27, cwf28, cwf29/ist3, lea1, msl1, prp5/cwf1, prp10, prp12/sap130, prp17, prp22, sap61, sap62, sap114, sap145, slu7, smb1, smd1, smd3, smf1, smg1 and syf2.

Its subcellular location is the nucleus. Functionally, involved in mRNA splicing and G2/M transition. In Schizosaccharomyces pombe (strain 972 / ATCC 24843) (Fission yeast), this protein is Pre-mRNA-splicing factor prp12 (prp12).